The sequence spans 226 residues: 2-C-methyl-D-erythritol 4-phosphate cytidylyltransferase (226 aa).

Belongs to the IspD/TarI cytidylyltransferase family. IspD subfamily.

The catalysed reaction is 2-C-methyl-D-erythritol 4-phosphate + CTP + H(+) = 4-CDP-2-C-methyl-D-erythritol + diphosphate. It participates in isoprenoid biosynthesis; isopentenyl diphosphate biosynthesis via DXP pathway; isopentenyl diphosphate from 1-deoxy-D-xylulose 5-phosphate: step 2/6. Its function is as follows. Catalyzes the formation of 4-diphosphocytidyl-2-C-methyl-D-erythritol from CTP and 2-C-methyl-D-erythritol 4-phosphate (MEP). The polypeptide is 2-C-methyl-D-erythritol 4-phosphate cytidylyltransferase (Thermosipho africanus (strain TCF52B)).